The primary structure comprises 337 residues: Probable tyrosine--tRNA ligase, cytoplasmic (337 aa).

An L-tyrosine-binding site is contributed by Y35. A 'HIGH' region motif is present at residues 40–48 (ITGKPHIAY). Positions 162, 166, 169, and 184 each coordinate L-tyrosine. The short motif at 218-222 (KMSSS) is the 'KMSKS' region element.

Belongs to the class-I aminoacyl-tRNA synthetase family. Homodimer.

The protein resides in the cytoplasm. It carries out the reaction tRNA(Tyr) + L-tyrosine + ATP = L-tyrosyl-tRNA(Tyr) + AMP + diphosphate + H(+). The polypeptide is Probable tyrosine--tRNA ligase, cytoplasmic (Encephalitozoon cuniculi (strain GB-M1) (Microsporidian parasite)).